Consider the following 108-residue polypeptide: UPF0060 membrane protein Ent638_1931 (108 aa).

4 consecutive transmembrane segments (helical) span residues 6–26 (LLFFATALCEIIGCFLPWLWL), 29–49 (GASVFLLLPAGIALALFVWLL), 61–81 (AAYGGVYVCTALLWLRVVDGV), and 85–105 (AYDWAGALVALCGMLIIVAGW).

Belongs to the UPF0060 family.

The protein resides in the cell inner membrane. The polypeptide is UPF0060 membrane protein Ent638_1931 (Enterobacter sp. (strain 638)).